The sequence spans 351 residues: Sulfate/thiosulfate import ATP-binding protein CysA (351 aa).

Residues I5–L235 form the ABC transporter domain. Residue G37 to S44 coordinates ATP.

The protein belongs to the ABC transporter superfamily. Sulfate/tungstate importer (TC 3.A.1.6) family. As to quaternary structure, the complex is composed of two ATP-binding proteins (CysA), two transmembrane proteins (CysT and CysW) and a solute-binding protein (CysP).

It localises to the cell membrane. The catalysed reaction is sulfate(out) + ATP + H2O = sulfate(in) + ADP + phosphate + H(+). The enzyme catalyses thiosulfate(out) + ATP + H2O = thiosulfate(in) + ADP + phosphate + H(+). Part of the ABC transporter complex CysAWTP involved in sulfate/thiosulfate import. Responsible for energy coupling to the transport system. The protein is Sulfate/thiosulfate import ATP-binding protein CysA of Mycobacterium bovis (strain ATCC BAA-935 / AF2122/97).